The sequence spans 203 residues: Small ribosomal subunit protein uS4 (203 aa).

Positions 93–153 (QRLDSVVYRL…EKSKNILPIQ (61 aa)) constitute an S4 RNA-binding domain.

This sequence belongs to the universal ribosomal protein uS4 family. Part of the 30S ribosomal subunit. Contacts protein S5. The interaction surface between S4 and S5 is involved in control of translational fidelity.

One of the primary rRNA binding proteins, it binds directly to 16S rRNA where it nucleates assembly of the body of the 30S subunit. Its function is as follows. With S5 and S12 plays an important role in translational accuracy. The protein is Small ribosomal subunit protein uS4 of Leuconostoc mesenteroides subsp. mesenteroides (strain ATCC 8293 / DSM 20343 / BCRC 11652 / CCM 1803 / JCM 6124 / NCDO 523 / NBRC 100496 / NCIMB 8023 / NCTC 12954 / NRRL B-1118 / 37Y).